The sequence spans 169 residues: Disulfide bond formation protein B (169 aa).

At 1–13 (MSQLQQFCHNRFS) the chain is on the cytoplasmic side. The helical transmembrane segment at 14–30 (WGLLLLSAIGLELAALF) threads the bilayer. Over 31 to 48 (FQYGMDLAPCVMCIYIRV) the chain is Periplasmic. An intrachain disulfide couples Cys40 to Cys43. Residues 49–64 (AVLGIILAALIGILQP) traverse the membrane as a helical segment. The Cytoplasmic portion of the chain corresponds to 65–71 (KVWLLRL). A helical membrane pass occupies residues 72 to 89 (VGMAGWAVSAVWGFKLAY). At 90–144 (ELNQMQVNPSPFATCSFYPEFPSFMPLDTWLPSVFSPTGMCSDSPWSWLSVSMAQ) the chain is on the periplasmic side. Residues Cys104 and Cys130 are joined by a disulfide bond. Residues 145–163 (WMMLGFAIYGVIWLLMLLP) form a helical membrane-spanning segment. Topologically, residues 164–169 (ALKSAK) are cytoplasmic.

The protein belongs to the DsbB family.

The protein localises to the cell inner membrane. Functionally, required for disulfide bond formation in some periplasmic proteins. Acts by oxidizing the DsbA protein. The sequence is that of Disulfide bond formation protein B from Shewanella frigidimarina (strain NCIMB 400).